The primary structure comprises 923 residues: Leucine--tRNA ligase (923 aa).

The short motif at 41 to 52 (PYPSGEGLHVGH) is the 'HIGH' region element. A 'KMSKS' region motif is present at residues 698 to 702 (KMSKS). Lys701 contacts ATP.

Belongs to the class-I aminoacyl-tRNA synthetase family.

The protein resides in the cytoplasm. The enzyme catalyses tRNA(Leu) + L-leucine + ATP = L-leucyl-tRNA(Leu) + AMP + diphosphate. This Amoebophilus asiaticus (strain 5a2) protein is Leucine--tRNA ligase.